We begin with the raw amino-acid sequence, 669 residues long: 5-taurinomethyluridine-[tRNA] synthase subunit MTO1, mitochondrial (669 aa).

Residues 1-25 constitute a mitochondrion transit peptide; that stretch reads MFLLRGRGHWAAASLGRRLPLRRLR. FAD-binding positions include 42–47, Val154, Ser217, and Gln406; that span reads GGGHAG. Lys507 bears the N6-methyllysine mark.

This sequence belongs to the MnmG family. As to quaternary structure, homodimer; forms a dimer in the presence of potassium. Interacts with GTPBP3; forms the GTPBP3-MTO1 complex composed of homodimers of GTPBP3 and MTO1. The cofactor is FAD. Ubiquitously expressed in various tissues, but with markedly elevated expression in tissues of high metabolic rates.

It localises to the mitochondrion. It catalyses the reaction 5,10-methylenetetrahydrofolate + uridine(34) in tRNA + taurine + GTP + A + H2O = 5-taurinomethyluridine(34) in tRNA + 7,8-dihydrofolate + GDP + AH2 + phosphate + H(+). Functionally, component of the GTPBP3-MTO1 complex that catalyzes the 5-taurinomethyluridine (taum(5)U) modification at the 34th wobble position (U34) of mitochondrial tRNAs (mt-tRNAs), which plays a role in mt-tRNA decoding and mitochondrial translation. Taum(5)U formation on mammalian mt-tRNA requires the presence of both GTPBP3-mediated GTPase activity and MTO1 catalytic activity. This Mus musculus (Mouse) protein is 5-taurinomethyluridine-[tRNA] synthase subunit MTO1, mitochondrial.